A 313-amino-acid polypeptide reads, in one-letter code: Ribosomal RNA small subunit methyltransferase H (313 aa).

Residues 35 to 37 (GGH), Asp55, Phe79, Asp101, and Gln108 contribute to the S-adenosyl-L-methionine site.

It belongs to the methyltransferase superfamily. RsmH family.

Its subcellular location is the cytoplasm. It carries out the reaction cytidine(1402) in 16S rRNA + S-adenosyl-L-methionine = N(4)-methylcytidine(1402) in 16S rRNA + S-adenosyl-L-homocysteine + H(+). Its function is as follows. Specifically methylates the N4 position of cytidine in position 1402 (C1402) of 16S rRNA. The polypeptide is Ribosomal RNA small subunit methyltransferase H (Salmonella arizonae (strain ATCC BAA-731 / CDC346-86 / RSK2980)).